Here is a 623-residue protein sequence, read N- to C-terminus: DEAD-box ATP-dependent RNA helicase 52C (623 aa).

The interval 1–120 (MATPSRTSWA…DGDAAAGAGD (120 aa)) is disordered. Low complexity predominate over residues 10–29 (ADVADADPAPAPAPAANGPA). The segment covering 54-69 (APPPSSSSSSAPPPRA) has biased composition (pro residues). Residues 70–83 (APGLLAPRPAAAGM) show a composition bias toward low complexity. A compositionally biased stretch (gly residues) spans 84-97 (GRMGGGGGGGGFGG). The short motif at 155-183 (GTFAEIDLGQALNDNIRRCKYVRPTPVQR) is the Q motif element. One can recognise a Helicase ATP-binding domain in the interval 186–372 (IPISLAGRDL…SDFLENYIFL (187 aa)). Residue 199–206 (AQTGSGKT) participates in ATP binding. The DEAD box motif lies at 316 to 319 (DEAD). Residues 399–550 (HLMDLLHAQR…EVPAWLSRYA (152 aa)) enclose the Helicase C-terminal domain. The disordered stretch occupies residues 553-595 (PSYGGGGGRNRRSGGGSRFGGRDFRRDSSSGRGGGDYYGGGSS). The segment covering 555–571 (YGGGGGRNRRSGGGSRF) has biased composition (gly residues). A compositionally biased stretch (basic and acidic residues) spans 572–581 (GGRDFRRDSS). The segment covering 583–595 (GRGGGDYYGGGSS) has biased composition (gly residues).

It belongs to the DEAD box helicase family. DDX3/DED1 subfamily.

The enzyme catalyses ATP + H2O = ADP + phosphate + H(+). The protein is DEAD-box ATP-dependent RNA helicase 52C of Oryza sativa subsp. japonica (Rice).